Consider the following 155-residue polypeptide: Putative pre-16S rRNA nuclease (155 aa).

This sequence belongs to the YqgF nuclease family.

Its subcellular location is the cytoplasm. Its function is as follows. Could be a nuclease involved in processing of the 5'-end of pre-16S rRNA. The protein is Putative pre-16S rRNA nuclease of Wolbachia pipientis wMel.